Consider the following 366-residue polypeptide: Inactive protein RESTRICTED TEV MOVEMENT 2 (366 aa).

The region spanning 14-121 is the sHSP domain; that stretch reads VQYEDFVPKS…LPETSRTEAA (108 aa). An A-1 repeat occupies 129 to 133; sequence LEEKR. Residues 129–220 are 6 X 5 AA repeats A of L-E-E-[SKR]-[ERK]; sequence LEEKRLLEES…LEERRLEERK (92 aa). Residues 135 to 139 form an A-2 repeat; sequence LEESR. The stretch at 156–160 is one A-3 repeat; that stretch reads LEEKE. One copy of the B-1 repeat lies at 163–176; sequence IRKLQEEAKAKEEA. The segment at 163–206 is 3 X 14 AA repeats B of [IMA]-[RK]-K-L-Q-E-E-A-K-A-K-E-[EK]-[LA]; sequence IRKLQEEAKAKEEAEMRKLQEEAKANEEAAAKKLQEEIEAKEKL. A B-2 repeat occupies 178–191; sequence MRKLQEEAKANEEA. The stretch at 193–205 is one B-3 repeat; that stretch reads AKKLQEEIEAKEK. Residues 206–210 form an A-4 repeat; it reads LEERK. The stretch at 211–215 is one A-5 repeat; it reads LEERR. An A-6 repeat occupies 216–220; that stretch reads LEERK. Residues 322–342 traverse the membrane as a helical segment; it reads LMMNVGVAALVIFALGAYVSY. The interval 345–366 is disordered; it reads CSSSSSSSSSSPSSSSSSTKPE. The segment covering 346 to 366 has biased composition (low complexity); that stretch reads SSSSSSSSSSPSSSSSSTKPE.

This sequence belongs to the small heat shock protein (HSP20) family.

It localises to the cell membrane. Its function is as follows. Seems to not be involved in heat resistance. Unable to mediate restriction of long-distance movement of the pathogenic tobacco etch virus (TEV) without causing a hypersensitive response or inducing systemic acquired resistance. The protein is Inactive protein RESTRICTED TEV MOVEMENT 2 (RTM2) of Arabidopsis thaliana (Mouse-ear cress).